The primary structure comprises 313 residues: 4-diphosphocytidyl-2-C-methyl-D-erythritol kinase (313 aa).

The active site involves Lys-29. ATP is bound at residue 113–123; that stretch reads PMGGGVGGGSS. Residue Asp-155 is part of the active site.

Belongs to the GHMP kinase family. IspE subfamily.

The enzyme catalyses 4-CDP-2-C-methyl-D-erythritol + ATP = 4-CDP-2-C-methyl-D-erythritol 2-phosphate + ADP + H(+). It functions in the pathway isoprenoid biosynthesis; isopentenyl diphosphate biosynthesis via DXP pathway; isopentenyl diphosphate from 1-deoxy-D-xylulose 5-phosphate: step 3/6. Catalyzes the phosphorylation of the position 2 hydroxy group of 4-diphosphocytidyl-2C-methyl-D-erythritol. The polypeptide is 4-diphosphocytidyl-2-C-methyl-D-erythritol kinase (Haemophilus influenzae (strain ATCC 51907 / DSM 11121 / KW20 / Rd)).